We begin with the raw amino-acid sequence, 496 residues long: Glutamate--tRNA ligase (496 aa).

The 'HIGH' region signature appears at 11–21; it reads PSPTGLLHIGN. A 'KMSKS' region motif is present at residues 255-259; that stretch reads KLSKR. Lysine 258 serves as a coordination point for ATP.

This sequence belongs to the class-I aminoacyl-tRNA synthetase family. Glutamate--tRNA ligase type 1 subfamily. Monomer.

Its subcellular location is the cytoplasm. It carries out the reaction tRNA(Glu) + L-glutamate + ATP = L-glutamyl-tRNA(Glu) + AMP + diphosphate. Catalyzes the attachment of glutamate to tRNA(Glu) in a two-step reaction: glutamate is first activated by ATP to form Glu-AMP and then transferred to the acceptor end of tRNA(Glu). The polypeptide is Glutamate--tRNA ligase (Streptococcus pyogenes serotype M49 (strain NZ131)).